The primary structure comprises 290 residues: 33 kDa chaperonin (290 aa).

Intrachain disulfides connect C235–C237 and C268–C271.

Belongs to the HSP33 family. Under oxidizing conditions two disulfide bonds are formed involving the reactive cysteines. Under reducing conditions zinc is bound to the reactive cysteines and the protein is inactive.

It localises to the cytoplasm. Redox regulated molecular chaperone. Protects both thermally unfolding and oxidatively damaged proteins from irreversible aggregation. Plays an important role in the bacterial defense system toward oxidative stress. The polypeptide is 33 kDa chaperonin (Streptococcus equi subsp. equi (strain 4047)).